Consider the following 369-residue polypeptide: Putative FAD-dependent monooxygenase YetM (369 aa).

An N-terminal signal peptide occupies residues 1 to 32 (MKHMLIAGGGIGGLSAAISLRKAGFSVTLCEA). Residues glycine 12, 31–32 (EA), valine 126, and aspartate 285 each bind FAD.

FAD serves as cofactor.

This Bacillus subtilis (strain 168) protein is Putative FAD-dependent monooxygenase YetM (yetM).